A 335-amino-acid chain; its full sequence is Nicotinate-nucleotide--dimethylbenzimidazole phosphoribosyltransferase (335 aa).

E304 acts as the Proton acceptor in catalysis.

This sequence belongs to the CobT family.

The catalysed reaction is 5,6-dimethylbenzimidazole + nicotinate beta-D-ribonucleotide = alpha-ribazole 5'-phosphate + nicotinate + H(+). Its pathway is nucleoside biosynthesis; alpha-ribazole biosynthesis; alpha-ribazole from 5,6-dimethylbenzimidazole: step 1/2. Functionally, catalyzes the synthesis of alpha-ribazole-5'-phosphate from nicotinate mononucleotide (NAMN) and 5,6-dimethylbenzimidazole (DMB). The polypeptide is Nicotinate-nucleotide--dimethylbenzimidazole phosphoribosyltransferase (Thermus thermophilus (strain ATCC 27634 / DSM 579 / HB8)).